Consider the following 475-residue polypeptide: Phosphoglucosamine mutase (475 aa).

Residue serine 126 is the Phosphoserine intermediate of the active site. Mg(2+) contacts are provided by serine 126, aspartate 265, aspartate 267, and aspartate 269. Serine 126 is modified (phosphoserine).

The protein belongs to the phosphohexose mutase family. Requires Mg(2+) as cofactor. Post-translationally, activated by phosphorylation.

It carries out the reaction alpha-D-glucosamine 1-phosphate = D-glucosamine 6-phosphate. Functionally, catalyzes the conversion of glucosamine-6-phosphate to glucosamine-1-phosphate. In Synechococcus sp. (strain ATCC 27144 / PCC 6301 / SAUG 1402/1) (Anacystis nidulans), this protein is Phosphoglucosamine mutase.